The primary structure comprises 412 residues: MIEAPPFDKSLGMLYYVTDTCPAGGVIKARPEDFIVEEVLKDGTVVALTGISLKPRVGSWTWIHVVKKNTDTLKLLLYLAKTLGLKARDISIGGIKDTRAVTSQIISIRGDVTNLPKIRNVEFLSFWPMDKPITPSLIYGNRFTITLRNVEKVDCAEATLKTLQYIALPNYYGYQRFGTIRPVSHLLGKALVKKDAEEFFDIMFCKIFAYESDVAKKAREAACKGDYRRALEIFPKRFIEERAVLRGLLRGLDLWNAIMSIPIQILRIYVEALQSYLFNLFLSKRMELGPLNRPIEGDLVEINGQVVHYAEGLGGEVVLPTVGVGVKMPRGKVGEAVLQLLKREGVEPSMFLKMPRGLRVYGGYRKVVLTLRDFRYAVDKEVTVSFTLPRGSYATVILREVVKPEEPYRHGF.

D97 serves as the catalytic Nucleophile. In terms of domain architecture, TRUD spans 167 to 370 (ALPNYYGYQR…YGGYRKVVLT (204 aa)).

It belongs to the pseudouridine synthase TruD family.

It carries out the reaction uridine(13) in tRNA = pseudouridine(13) in tRNA. Functionally, could be responsible for synthesis of pseudouridine from uracil-13 in transfer RNAs. This chain is Probable tRNA pseudouridine synthase D, found in Pyrobaculum islandicum (strain DSM 4184 / JCM 9189 / GEO3).